Consider the following 326-residue polypeptide: Peroxidase 39 (326 aa).

The N-terminal stretch at 1–23 (MTRFGLALLMILVIQGLVTFSEA) is a signal peptide. 4 disulfides stabilise this stretch: cysteine 34–cysteine 114, cysteine 67–cysteine 72, cysteine 120–cysteine 322, and cysteine 199–cysteine 232. The Proton acceptor role is filled by histidine 65. 5 residues coordinate Ca(2+): aspartate 66, valine 69, glycine 71, aspartate 73, and serine 75. The N-linked (GlcNAc...) asparagine glycan is linked to asparagine 79. Proline 162 lines the substrate pocket. The N-linked (GlcNAc...) asparagine glycan is linked to asparagine 167. Histidine 192 serves as a coordination point for heme b. A Ca(2+)-binding site is contributed by threonine 193. N-linked (GlcNAc...) asparagine glycans are attached at residues asparagine 208 and asparagine 238. Ca(2+) contacts are provided by aspartate 245, serine 248, and aspartate 253.

It belongs to the peroxidase family. Classical plant (class III) peroxidase subfamily. Heme b is required as a cofactor. The cofactor is Ca(2+). As to expression, slightly expressed in roots.

It is found in the secreted. It carries out the reaction 2 a phenolic donor + H2O2 = 2 a phenolic radical donor + 2 H2O. Functionally, removal of H(2)O(2), oxidation of toxic reductants, biosynthesis and degradation of lignin, suberization, auxin catabolism, response to environmental stresses such as wounding, pathogen attack and oxidative stress. These functions might be dependent on each isozyme/isoform in each plant tissue. The protein is Peroxidase 39 (PER39) of Arabidopsis thaliana (Mouse-ear cress).